Reading from the N-terminus, the 449-residue chain is Exodeoxyribonuclease 7 large subunit (449 aa).

The protein belongs to the XseA family. Heterooligomer composed of large and small subunits.

The protein resides in the cytoplasm. The enzyme catalyses Exonucleolytic cleavage in either 5'- to 3'- or 3'- to 5'-direction to yield nucleoside 5'-phosphates.. Functionally, bidirectionally degrades single-stranded DNA into large acid-insoluble oligonucleotides, which are then degraded further into small acid-soluble oligonucleotides. The chain is Exodeoxyribonuclease 7 large subunit from Salmonella typhimurium (strain LT2 / SGSC1412 / ATCC 700720).